Consider the following 368-residue polypeptide: Probable dual-specificity RNA methyltransferase RlmN (368 aa).

E100 serves as the catalytic Proton acceptor. Residues 106 to 344 (QYYGLSVCVT…CVVRQEHGTD (239 aa)) form the Radical SAM core domain. Cysteines 113 and 349 form a disulfide. C120, C124, and C127 together coordinate [4Fe-4S] cluster. S-adenosyl-L-methionine-binding positions include 172–173 (GE), S204, 227–229 (SLH), and N305. Catalysis depends on C349, which acts as the S-methylcysteine intermediate.

It belongs to the radical SAM superfamily. RlmN family. It depends on [4Fe-4S] cluster as a cofactor.

It is found in the cytoplasm. It carries out the reaction adenosine(2503) in 23S rRNA + 2 reduced [2Fe-2S]-[ferredoxin] + 2 S-adenosyl-L-methionine = 2-methyladenosine(2503) in 23S rRNA + 5'-deoxyadenosine + L-methionine + 2 oxidized [2Fe-2S]-[ferredoxin] + S-adenosyl-L-homocysteine. The catalysed reaction is adenosine(37) in tRNA + 2 reduced [2Fe-2S]-[ferredoxin] + 2 S-adenosyl-L-methionine = 2-methyladenosine(37) in tRNA + 5'-deoxyadenosine + L-methionine + 2 oxidized [2Fe-2S]-[ferredoxin] + S-adenosyl-L-homocysteine. Its function is as follows. Specifically methylates position 2 of adenine 2503 in 23S rRNA and position 2 of adenine 37 in tRNAs. The polypeptide is Probable dual-specificity RNA methyltransferase RlmN (Streptococcus agalactiae serotype III (strain NEM316)).